We begin with the raw amino-acid sequence, 449 residues long: Mitochondrial distribution and morphology protein 10 (449 aa).

Disordered stretches follow at residues 215–244 and 282–307; these read GPSE…DEED and DATP…GAPS. Residues 285–301 are compositionally biased toward low complexity; that stretch reads PPSFQLPSSSPTQPSLL.

Belongs to the MDM10 family. In terms of assembly, component of the ER-mitochondria encounter structure (ERMES) or MDM complex, composed of MMM1, MDM10, MDM12 and MDM34. Associates with the mitochondrial outer membrane sorting assembly machinery SAM(core) complex.

Its subcellular location is the mitochondrion outer membrane. Functionally, component of the ERMES/MDM complex, which serves as a molecular tether to connect the endoplasmic reticulum and mitochondria. Components of this complex are involved in the control of mitochondrial shape and protein biogenesis and may function in phospholipid exchange. MDM10 is involved in the late assembly steps of the general translocase of the mitochondrial outer membrane (TOM complex). Functions in the TOM40-specific route of the assembly of outer membrane beta-barrel proteins, including the association of TOM40 with the receptor TOM22 and small TOM proteins. Can associate with the SAM(core) complex as well as the MDM12-MMM1 complex, both involved in late steps of the major beta-barrel assembly pathway, that is responsible for biogenesis of all outer membrane beta-barrel proteins. May act as a switch that shuttles between both complexes and channels precursor proteins into the TOM40-specific pathway. Plays a role in mitochondrial morphology and in the inheritance of mitochondria. This is Mitochondrial distribution and morphology protein 10 from Postia placenta (strain ATCC 44394 / Madison 698-R) (Brown rot fungus).